Here is a 1004-residue protein sequence, read N- to C-terminus: Kinesin-like protein KIN-14R (1004 aa).

Disordered stretches follow at residues 1–21 (MEEE…RIGD), 61–90 (PYVD…MQHD), and 110–169 (ELFS…ATMG). The segment covering 63–75 (VDDDDDGNSEEEN) has biased composition (acidic residues). Positions 115 to 125 (PSPPQGPPSPS) are enriched in pro residues. Coiled-coil stretches lie at residues 189–230 (CGQL…AQAS) and 266–338 (LNDL…LYNK). One can recognise a Kinesin motor domain in the interval 345–671 (NIRVFCRCRP…LNFASRVRGI (327 aa)). ATP is bound at residue 428–435 (GQTGTGKT). Residues 691–742 (MAGRAKQDSKNKDAQIKSMEETIQSLEAKNKAKDLLTMNLQEKIKELEAQLL) are a coiled coil. Disordered stretches follow at residues 759 to 791 (DHLH…STAE) and 946 to 1004 (SGRR…RQLN). Positions 948–958 (RRAGAGVAGTT) are enriched in low complexity. A compositionally biased stretch (polar residues) spans 995-1004 (NNGTSLRQLN).

Belongs to the TRAFAC class myosin-kinesin ATPase superfamily. Kinesin family. KIN-14 subfamily.

The chain is Kinesin-like protein KIN-14R from Oryza sativa subsp. japonica (Rice).